Reading from the N-terminus, the 396-residue chain is Phosphoglycerate kinase (396 aa).

Substrate is bound by residues 21–23 (DFN), arginine 36, 59–62 (HLGK), arginine 119, and arginine 156. ATP is bound by residues lysine 206, glutamate 325, and 352–355 (GGDS).

It belongs to the phosphoglycerate kinase family. As to quaternary structure, monomer.

It is found in the cytoplasm. It catalyses the reaction (2R)-3-phosphoglycerate + ATP = (2R)-3-phospho-glyceroyl phosphate + ADP. It functions in the pathway carbohydrate degradation; glycolysis; pyruvate from D-glyceraldehyde 3-phosphate: step 2/5. The sequence is that of Phosphoglycerate kinase from Staphylococcus epidermidis (strain ATCC 35984 / DSM 28319 / BCRC 17069 / CCUG 31568 / BM 3577 / RP62A).